The following is an 88-amino-acid chain: Small ribosomal subunit protein uS15 (88 aa).

The protein belongs to the universal ribosomal protein uS15 family. Part of the 30S ribosomal subunit. Forms a bridge to the 50S subunit in the 70S ribosome, contacting the 23S rRNA.

Its function is as follows. One of the primary rRNA binding proteins, it binds directly to 16S rRNA where it helps nucleate assembly of the platform of the 30S subunit by binding and bridging several RNA helices of the 16S rRNA. Forms an intersubunit bridge (bridge B4) with the 23S rRNA of the 50S subunit in the ribosome. This Mesomycoplasma flocculare (Mycoplasma flocculare) protein is Small ribosomal subunit protein uS15.